The sequence spans 407 residues: Argininosuccinate synthase (407 aa).

ATP is bound by residues 13-21 (AYSGGLDTS) and Ala40. L-citrulline is bound by residues Tyr91 and Ser96. Gly121 provides a ligand contact to ATP. L-aspartate is bound by residues Thr123, Asn127, and Asp128. An L-citrulline-binding site is contributed by Asn127. The L-citrulline site is built by Arg131, Ser182, Ser191, Glu267, and Tyr279.

Belongs to the argininosuccinate synthase family. Type 1 subfamily. In terms of assembly, homotetramer.

The protein resides in the cytoplasm. It carries out the reaction L-citrulline + L-aspartate + ATP = 2-(N(omega)-L-arginino)succinate + AMP + diphosphate + H(+). Its pathway is amino-acid biosynthesis; L-arginine biosynthesis; L-arginine from L-ornithine and carbamoyl phosphate: step 2/3. The chain is Argininosuccinate synthase from Bartonella bacilliformis (strain ATCC 35685 / KC583 / Herrer 020/F12,63).